A 70-amino-acid polypeptide reads, in one-letter code: Large ribosomal subunit protein bL33m (70 aa).

It belongs to the bacterial ribosomal protein bL33 family. In terms of assembly, component of the mitochondrial large ribosomal subunit (mt-LSU). Mature yeast 74S mitochondrial ribosomes consist of a small (37S) and a large (54S) subunit. The 37S small subunit contains a 15S ribosomal RNA (15S mt-rRNA) and 34 different proteins. The 54S large subunit contains a 21S rRNA (21S mt-rRNA) and 46 different proteins. bL33m stabilizes the tRNA acceptor stem in the E-site.

The protein resides in the mitochondrion. In terms of biological role, component of the mitochondrial ribosome (mitoribosome), a dedicated translation machinery responsible for the synthesis of mitochondrial genome-encoded proteins, including at least some of the essential transmembrane subunits of the mitochondrial respiratory chain. The mitoribosomes are attached to the mitochondrial inner membrane and translation products are cotranslationally integrated into the membrane. The sequence is that of Large ribosomal subunit protein bL33m (MRPL39) from Saccharomyces cerevisiae (strain ATCC 204508 / S288c) (Baker's yeast).